A 90-amino-acid polypeptide reads, in one-letter code: Probable Fe(2+)-trafficking protein (90 aa).

It belongs to the Fe(2+)-trafficking protein family.

Could be a mediator in iron transactions between iron acquisition and iron-requiring processes, such as synthesis and/or repair of Fe-S clusters in biosynthetic enzymes. The polypeptide is Probable Fe(2+)-trafficking protein (Acinetobacter baylyi (strain ATCC 33305 / BD413 / ADP1)).